Consider the following 234-residue polypeptide: Ubiquitin carboxyl-terminal hydrolase 3 (234 aa).

One can recognise a UCH catalytic domain in the interval Arg-12–Lys-232. Cys-101 (nucleophile) is an active-site residue. Residue His-172 is the Proton donor of the active site.

The protein belongs to the peptidase C12 family.

It catalyses the reaction Thiol-dependent hydrolysis of ester, thioester, amide, peptide and isopeptide bonds formed by the C-terminal Gly of ubiquitin (a 76-residue protein attached to proteins as an intracellular targeting signal).. The sequence is that of Ubiquitin carboxyl-terminal hydrolase 3 from Arabidopsis thaliana (Mouse-ear cress).